A 906-amino-acid polypeptide reads, in one-letter code: Eukaryotic translation initiation factor 4 gamma 2 (906 aa).

Met1 bears the N-acetylmethionine mark. The tract at residues 1 to 71 (MESAIAEGGA…SAANNSANEK (71 aa)) is disordered. Ser11 is modified (phosphoserine). The MIF4G domain maps to 78 to 308 (FRKVRGILNK…QDTVELREHH (231 aa)). Residue Thr89 is modified to Phosphothreonine. At Arg359 the chain carries Omega-N-methylarginine. Ser394 carries the post-translational modification Phosphoserine. An N6-methyllysine modification is found at Lys430. At Ser442 the chain carries Phosphoserine. Positions 497–540 (PPSAQPPRTQTPPLGQTPQLGLKTNPPLIQEKPAKTSKKPPPSK) are disordered. A compositionally biased stretch (polar residues) spans 502-515 (PPRTQTPPLGQTPQ). Arg504 is subject to Omega-N-methylarginine. Thr507 and Thr513 each carry phosphothreonine. Residues 542-665 (ELLKLTEAVV…SISELAQPLE (124 aa)) form the MI domain. Lys574 participates in a covalent cross-link: Glycyl lysine isopeptide (Lys-Gly) (interchain with G-Cter in SUMO2). The region spanning 719–903 (EGKGLSFLFP…ETAEEEESEE (185 aa)) is the W2 domain. At Ser901 the chain carries Phosphoserine.

Belongs to the eukaryotic initiation factor 4G family. Interacts with the serine/threonine protein kinases MKNK1 and MKNK2. Binds EIF4A and EIF3. Interacts with MIF4GD. Interacts with DAZAP2. Phosphorylation; hyperphosphorylated during mitosis. Ubiquitously expressed in all tissues examined.

In terms of biological role, appears to play a role in the switch from cap-dependent to IRES-mediated translation during mitosis, apoptosis and viral infection. Cleaved by some caspases and viral proteases. The chain is Eukaryotic translation initiation factor 4 gamma 2 from Mus musculus (Mouse).